Reading from the N-terminus, the 333-residue chain is Ribosomal RNA small subunit methyltransferase H (333 aa).

S-adenosyl-L-methionine-binding positions include 43–45 (GGH), Asp-62, Tyr-89, Asp-110, and Gln-117. Residues 312 to 333 (RLRAARRIRTTPTRPSPRRRRP) are disordered.

This sequence belongs to the methyltransferase superfamily. RsmH family.

Its subcellular location is the cytoplasm. It carries out the reaction cytidine(1402) in 16S rRNA + S-adenosyl-L-methionine = N(4)-methylcytidine(1402) in 16S rRNA + S-adenosyl-L-homocysteine + H(+). Its function is as follows. Specifically methylates the N4 position of cytidine in position 1402 (C1402) of 16S rRNA. The sequence is that of Ribosomal RNA small subunit methyltransferase H from Beutenbergia cavernae (strain ATCC BAA-8 / DSM 12333 / CCUG 43141 / JCM 11478 / NBRC 16432 / NCIMB 13614 / HKI 0122).